The primary structure comprises 1081 residues: FHF complex subunit HOOK-interacting protein 1A (1081 aa).

4 disordered regions span residues 474–496 (SEEQLLPETPCSPSSPSPPPPPA), 544–623 (PETF…DPPK), 658–770 (EKDT…ENEP), and 863–883 (EAGSSPFGVGEDTAFSSRHPV). Pro residues predominate over residues 486–496 (PSSPSPPPPPA). Positions 553–564 (EESRENSGHPEA) are enriched in basic and acidic residues. Polar residues predominate over residues 567–576 (PQQSVRTSGQ). The span at 680 to 707 (EPLEDTSEQQEDTSEQLEDTSELQEDTA) shows a compositional bias: acidic residues. Composition is skewed to polar residues over residues 727–738 (EAQSLPTSNGPL) and 746–762 (ESQPSRESSDLCQNTFS).

It belongs to the FHIP family. May be a component of the FTS/Hook/FHIP complex (FHF complex), composed of AKTIP/FTS, FHIP1B, and one or more members of the Hook family of proteins HOOK1, HOOK2, and HOOK3. May interact directly with AKTIP/FTS.

Its function is as follows. Probable component of the FTS/Hook/FHIP complex (FHF complex). FHF complex promotes the distribution of AP-4 complex to the perinuclear area of the cell. The protein is FHF complex subunit HOOK-interacting protein 1A of Mus musculus (Mouse).